Reading from the N-terminus, the 359-residue chain is Prostaglandin F2-alpha receptor (359 aa).

Residues 1 to 31 lie on the Extracellular side of the membrane; the sequence is MSMNNSKQLVSPAAALLSNTTCQTENRLSVF. N-linked (GlcNAc...) asparagine glycans are attached at residues N4 and N19. Residues 32–54 form a helical membrane-spanning segment; it reads FSVIFMTVGILSNSLAIAILMKA. The Cytoplasmic portion of the chain corresponds to 55-69; it reads YQRFRQKSKASFLLL. A helical membrane pass occupies residues 70–90; sequence ASGLVITDFFGHLINGAIAVF. At 91–109 the chain is on the extracellular side; the sequence is VYASDKEWIRFDQSNVLCS. The cysteines at positions 108 and 186 are disulfide-linked. A helical transmembrane segment spans residues 110–131; that stretch reads IFGICMVFSGLCPLLLGSVMAI. The Cytoplasmic segment spans residues 132–152; sequence ERCIGVTKPIFHSTKITSKHV. A helical membrane pass occupies residues 153–175; the sequence is KMMLSGVCLFAVFIALLPILGHR. Topologically, residues 176 to 198 are extracellular; that stretch reads DYKIQASRTWCFYNTEDIKDWED. The helical transmembrane segment at 199–224 threads the bilayer; it reads RFYLLLFSFLGLLALGVSLLCNAITG. Topologically, residues 225-250 are cytoplasmic; sequence ITLLRVKFKSQQHRQGRSHHLEMVIQ. A helical membrane pass occupies residues 251 to 267; the sequence is LLAIMCVSCICWSPFLV. Residues 268-285 are Extracellular-facing; sequence TMANIGINGNHSLETCET. A helical transmembrane segment spans residues 286-307; the sequence is TLFALRMATWNQILDPWVYILL. Residues 308-359 lie on the Cytoplasmic side of the membrane; it reads RKAVLKNLYKLASQCCGVHVISLHIWELSSIKNSLKVAAISESPVAEKSAST.

The protein belongs to the G-protein coupled receptor 1 family. As to quaternary structure, isoform 1 can form heterodimers with isoform 5 (and probably other isoforms). In terms of tissue distribution, eye.

Its subcellular location is the cell membrane. Its function is as follows. Receptor for prostaglandin F2-alpha (PGF2-alpha). The activity of this receptor is mediated by G proteins which activate a phosphatidylinositol-calcium second messenger system. Initiates luteolysis in the corpus luteum. Isoforms 2 to 7 do not bind PGF2-alpha but are proposed to modulate signaling by participating in variant receptor complexes; heterodimers between isoform 1 and isoform 5 are proposed to be a receptor for prostamides including the synthetic analog bimatoprost. The sequence is that of Prostaglandin F2-alpha receptor (PTGFR) from Homo sapiens (Human).